We begin with the raw amino-acid sequence, 324 residues long: Malate dehydrogenase (324 aa).

Residues 21–26 (GAGRVG) and aspartate 45 contribute to the NAD(+) site. Residues arginine 94 and arginine 100 each coordinate substrate. Residues asparagine 107 and 130–132 (VTN) each bind NAD(+). 2 residues coordinate substrate: asparagine 132 and arginine 163. The active-site Proton acceptor is histidine 187.

The protein belongs to the LDH/MDH superfamily. MDH type 3 family.

The enzyme catalyses (S)-malate + NAD(+) = oxaloacetate + NADH + H(+). Functionally, catalyzes the reversible oxidation of malate to oxaloacetate. This Trichormus variabilis (strain ATCC 29413 / PCC 7937) (Anabaena variabilis) protein is Malate dehydrogenase.